Reading from the N-terminus, the 45-residue chain is Cytochrome b559 subunit beta (45 aa).

The helical transmembrane segment at 20–36 threads the bilayer; sequence WLAVHTLGVPTVFFLGA. Histidine 24 contacts heme.

This sequence belongs to the PsbE/PsbF family. Heterodimer of an alpha subunit and a beta subunit. PSII is composed of 1 copy each of membrane proteins PsbA, PsbB, PsbC, PsbD, PsbE, PsbF, PsbH, PsbI, PsbJ, PsbK, PsbL, PsbM, PsbT, PsbX, PsbY, PsbZ, Psb30/Ycf12, peripheral proteins PsbO, CyanoQ (PsbQ), PsbU, PsbV and a large number of cofactors. It forms dimeric complexes. Requires heme b as cofactor.

The protein localises to the cellular thylakoid membrane. Functionally, this b-type cytochrome is tightly associated with the reaction center of photosystem II (PSII). PSII is a light-driven water:plastoquinone oxidoreductase that uses light energy to abstract electrons from H(2)O, generating O(2) and a proton gradient subsequently used for ATP formation. It consists of a core antenna complex that captures photons, and an electron transfer chain that converts photonic excitation into a charge separation. In Nostoc punctiforme (strain ATCC 29133 / PCC 73102), this protein is Cytochrome b559 subunit beta.